A 160-amino-acid polypeptide reads, in one-letter code: Ribosomal RNA large subunit methyltransferase H (160 aa).

S-adenosyl-L-methionine-binding positions include Leu-77, Gly-109, and 128-133; that span reads LSNLTF.

Belongs to the RNA methyltransferase RlmH family. In terms of assembly, homodimer.

It is found in the cytoplasm. It carries out the reaction pseudouridine(1915) in 23S rRNA + S-adenosyl-L-methionine = N(3)-methylpseudouridine(1915) in 23S rRNA + S-adenosyl-L-homocysteine + H(+). Its function is as follows. Specifically methylates the pseudouridine at position 1915 (m3Psi1915) in 23S rRNA. This is Ribosomal RNA large subunit methyltransferase H from Desulforamulus reducens (strain ATCC BAA-1160 / DSM 100696 / MI-1) (Desulfotomaculum reducens).